The following is a 430-amino-acid chain: Mannan endo-1,4-beta-mannosidase (430 aa).

Catalysis depends on Glu-173, which acts as the Proton donor. Glu-269 functions as the Nucleophile in the catalytic mechanism. 2 CBM10 domains span residues 357–390 and 395–424; these read SCGTAPNGYPYCCNASSATGNGWGWENNRSCVVA and SCNWYGTSYPICVNTSSGWGWENNRSCIAA.

It belongs to the glycosyl hydrolase 5 (cellulase A) family.

The catalysed reaction is Random hydrolysis of (1-&gt;4)-beta-D-mannosidic linkages in mannans, galactomannans and glucomannans.. Functionally, catalyzes the endo hydrolysis of beta-1,4-linked mannan, galactomannan and glucomannan. It is able to hydrolyze mannosidic linkages that are flanked by mannose or glucose. The chain is Mannan endo-1,4-beta-mannosidase from Cellvibrio japonicus (strain Ueda107) (Pseudomonas fluorescens subsp. cellulosa).